Consider the following 110-residue polypeptide: MTELMKIAALFAVTALAEIVGCYLPWLVLKGGRPVWLLVPAALSLALFAWLLTLHPSAAGRTYAAYGGVYIAVALIWLRVVDGVALTRWDAAGAVLALGGMAVIALQPRA.

A run of 4 helical transmembrane segments spans residues A9 to L29, P34 to L54, Y66 to L86, and R88 to P108.

Belongs to the UPF0060 family.

It localises to the cell inner membrane. This chain is UPF0060 membrane protein Bamb_1160, found in Burkholderia ambifaria (strain ATCC BAA-244 / DSM 16087 / CCUG 44356 / LMG 19182 / AMMD) (Burkholderia cepacia (strain AMMD)).